The following is a 557-amino-acid chain: Potassium-transporting ATPase potassium-binding subunit (557 aa).

Transmembrane regions (helical) follow at residues 5–25 (GFLLIATFLLVFMVLARPLGS), 63–83 (LSAILGLNILGLAVLFFMLLG), 132–152 (GLTVQNFLSAASGIAVIFALI), 170–190 (LLRITLWVLTPVALLIALFFI), 253–273 (FVQMLAIFLIPTALCFAFGEV), 283–303 (LLWAMSVIFVICVGVVMWAEV), 329–349 (VLVSSLFAVVTTAASCGAVIA), 356–376 (ALGGMVPMWLMQIGEVVFGGV), 379–399 (GLYGMMLFVLLAVFIAGLMIG), 416–436 (LTALAILVTPTLVLMGAALAM), 484–504 (LLALCMFVGRFGVIIPVMAIA), and 526–546 (LFVGLLIGTVLLVGALTFIPA).

It belongs to the KdpA family. In terms of assembly, the system is composed of three essential subunits: KdpA, KdpB and KdpC.

It localises to the cell inner membrane. In terms of biological role, part of the high-affinity ATP-driven potassium transport (or Kdp) system, which catalyzes the hydrolysis of ATP coupled with the electrogenic transport of potassium into the cytoplasm. This subunit binds the periplasmic potassium ions and delivers the ions to the membrane domain of KdpB through an intramembrane tunnel. The chain is Potassium-transporting ATPase potassium-binding subunit from Escherichia coli (strain UTI89 / UPEC).